We begin with the raw amino-acid sequence, 594 residues long: Probable translation initiation factor IF-2 (594 aa).

The 220-residue stretch at 5-224 folds into the tr-type G domain; that stretch reads YRAPIVVVVG…LMAGLTQRLV (220 aa). The interval 14–21 is G1; sequence GHVDVGKT. 14–21 lines the GTP pocket; it reads GHVDVGKT. The interval 39 to 43 is G2; that stretch reads MITQH. The interval 80 to 83 is G3; the sequence is DTPG. GTP contacts are provided by residues 80 to 84 and 134 to 137; these read DTPGH and NKVD. The G4 stretch occupies residues 134–137; that stretch reads NKVD. The G5 stretch occupies residues 202–204; the sequence is SAV.

The protein belongs to the TRAFAC class translation factor GTPase superfamily. Classic translation factor GTPase family. IF-2 subfamily.

In terms of biological role, function in general translation initiation by promoting the binding of the formylmethionine-tRNA to ribosomes. Seems to function along with eIF-2. The sequence is that of Probable translation initiation factor IF-2 from Caldivirga maquilingensis (strain ATCC 700844 / DSM 13496 / JCM 10307 / IC-167).